Here is a 423-residue protein sequence, read N- to C-terminus: Imidazolonepropionase (423 aa).

Residues His-78 and His-80 each coordinate Fe(3+). Residues His-78 and His-80 each contribute to the Zn(2+) site. 3 residues coordinate 4-imidazolone-5-propanoate: Arg-87, Tyr-150, and His-183. Tyr-150 provides a ligand contact to N-formimidoyl-L-glutamate. His-247 serves as a coordination point for Fe(3+). His-247 serves as a coordination point for Zn(2+). Glu-250 provides a ligand contact to 4-imidazolone-5-propanoate. Asp-322 contributes to the Fe(3+) binding site. Asp-322 contacts Zn(2+). Residues Asn-324 and Gly-326 each coordinate N-formimidoyl-L-glutamate. Ser-327 contacts 4-imidazolone-5-propanoate.

The protein belongs to the metallo-dependent hydrolases superfamily. HutI family. Zn(2+) is required as a cofactor. The cofactor is Fe(3+).

It localises to the cytoplasm. It catalyses the reaction 4-imidazolone-5-propanoate + H2O = N-formimidoyl-L-glutamate. Its pathway is amino-acid degradation; L-histidine degradation into L-glutamate; N-formimidoyl-L-glutamate from L-histidine: step 3/3. Functionally, catalyzes the hydrolytic cleavage of the carbon-nitrogen bond in imidazolone-5-propanoate to yield N-formimidoyl-L-glutamate. It is the third step in the universal histidine degradation pathway. The polypeptide is Imidazolonepropionase (Bacillus cereus (strain ATCC 10987 / NRS 248)).